A 246-amino-acid polypeptide reads, in one-letter code: Small ribosomal subunit protein uS2 (246 aa).

Belongs to the universal ribosomal protein uS2 family.

The chain is Small ribosomal subunit protein uS2 from Lachnoclostridium phytofermentans (strain ATCC 700394 / DSM 18823 / ISDg) (Clostridium phytofermentans).